Consider the following 290-residue polypeptide: ATP synthase gamma chain (290 aa).

The protein belongs to the ATPase gamma chain family. In terms of assembly, F-type ATPases have 2 components, CF(1) - the catalytic core - and CF(0) - the membrane proton channel. CF(1) has five subunits: alpha(3), beta(3), gamma(1), delta(1), epsilon(1). CF(0) has three main subunits: a, b and c.

It localises to the cell membrane. In terms of biological role, produces ATP from ADP in the presence of a proton gradient across the membrane. The gamma chain is believed to be important in regulating ATPase activity and the flow of protons through the CF(0) complex. The polypeptide is ATP synthase gamma chain (Rubrobacter xylanophilus (strain DSM 9941 / JCM 11954 / NBRC 16129 / PRD-1)).